The chain runs to 370 residues: Putative agmatine deiminase (370 aa).

Cysteine 361 serves as the catalytic Amidino-cysteine intermediate.

It belongs to the agmatine deiminase family.

The catalysed reaction is agmatine + H2O = N-carbamoylputrescine + NH4(+). This chain is Putative agmatine deiminase, found in Shewanella baltica (strain OS185).